The sequence spans 556 residues: Glucomannan 4-beta-mannosyltransferase 7 (556 aa).

A helical membrane pass occupies residues V58–F78. D158 is a catalytic residue. Residues D217 and D219 each coordinate substrate. The active site involves D311. Helical transmembrane passes span I390–F410, L426–F448, L502–G522, and L526–G546.

Belongs to the glycosyltransferase 2 family. Plant cellulose synthase-like A subfamily. Ubiquitous.

The protein resides in the golgi apparatus membrane. It carries out the reaction GDP-mannose + (glucomannan)n = GDP + (glucomannan)n+1.. Its function is as follows. Probable mannan synthase which consists of a 4-beta-mannosyltransferase activity on mannan using GDP-mannose. The beta-1,4-mannan product is the backbone for galactomannan synthesis by galactomannan galactosyltransferase. Galactomannan is a noncellulosic polysaccharides of plant cell wall. Required for synthesis of a cell wall polysaccharide essential for pollen tube growth, for cell wall structure, or for signaling during plant embryo development. This chain is Glucomannan 4-beta-mannosyltransferase 7, found in Arabidopsis thaliana (Mouse-ear cress).